The following is a 435-amino-acid chain: MIVNVIGAGLAGSEVTYNLGKRGIRVRLFEMRPKKMTEVHKTGYFAELVCSNSLKSEDITNAEGLLKAEMRLMGSITLEAAEKARVPSGKALAVDRNIFAKEVTEAVESLESVEIIREEVTEFDPEEGIWVVATGPATSDGLLPFLKKLLGDDFLFFFDAVSPIVTFESIDMERAFWGDRFGKGKDYINCPLTKEEYEEFWKALVEAEVIEMEDFDRKLLFERCQPIEEIARSGKDALRYGPLRPTGLVDPRTGKEPYAVIQLRREDKEGRFYSLVGFQTRLKWSEQKRVLRKIPCLRNAEIVRYGVMHRNVYINSPKLLDIFFRLKKHPNIFFAGQITGVEGYMESAASGIYVAYNVHRILKGLSPLKLPEETMMGALFSYIIEKVEGDLKPMYANFGLLPPLKVRVKDKFEKRKKLAERAIETMKKFLEENPW.

7-12 (GAGLAG) is an FAD binding site.

It belongs to the MnmG family. TrmFO subfamily. The cofactor is FAD.

The protein resides in the cytoplasm. The catalysed reaction is uridine(54) in tRNA + (6R)-5,10-methylene-5,6,7,8-tetrahydrofolate + NADH + H(+) = 5-methyluridine(54) in tRNA + (6S)-5,6,7,8-tetrahydrofolate + NAD(+). It carries out the reaction uridine(54) in tRNA + (6R)-5,10-methylene-5,6,7,8-tetrahydrofolate + NADPH + H(+) = 5-methyluridine(54) in tRNA + (6S)-5,6,7,8-tetrahydrofolate + NADP(+). Functionally, catalyzes the folate-dependent formation of 5-methyl-uridine at position 54 (M-5-U54) in all tRNAs. This Thermotoga sp. (strain RQ2) protein is Methylenetetrahydrofolate--tRNA-(uracil-5-)-methyltransferase TrmFO.